The following is a 299-amino-acid chain: Oxygen-dependent coproporphyrinogen-III oxidase (299 aa).

A substrate-binding site is contributed by Ser-92. His-96 and His-106 together coordinate Mn(2+). His-106 functions as the Proton donor in the catalytic mechanism. 108-110 lines the substrate pocket; the sequence is NVR. His-145 and His-175 together coordinate Mn(2+). Residues 240-275 are important for dimerization; the sequence is YVEFNLVWDRGTLFGLQTGGRTESILMSMPPLVRWE. 258–260 is a binding site for substrate; that stretch reads GGR.

This sequence belongs to the aerobic coproporphyrinogen-III oxidase family. Homodimer. Requires Mn(2+) as cofactor.

The protein localises to the cytoplasm. The catalysed reaction is coproporphyrinogen III + O2 + 2 H(+) = protoporphyrinogen IX + 2 CO2 + 2 H2O. The protein operates within porphyrin-containing compound metabolism; protoporphyrin-IX biosynthesis; protoporphyrinogen-IX from coproporphyrinogen-III (O2 route): step 1/1. Involved in the heme biosynthesis. Catalyzes the aerobic oxidative decarboxylation of propionate groups of rings A and B of coproporphyrinogen-III to yield the vinyl groups in protoporphyrinogen-IX. The sequence is that of Oxygen-dependent coproporphyrinogen-III oxidase from Escherichia coli O8 (strain IAI1).